We begin with the raw amino-acid sequence, 1587 residues long: Mediator of RNA polymerase II transcription subunit 23 (1587 aa).

Disordered stretches follow at residues 1374 to 1484 and 1567 to 1587; these read SQSE…QLQH and QHQQYMQQQQQHHHQHQQQPH. Basic and acidic residues predominate over residues 1385 to 1404; it reads PPEKEKSPEKEKEQEQEQHV. Residues 1387-1404 are acidic; it reads EKEKSPEKEKEQEQEQHV. Residues 1410–1426 are compositionally biased toward polar residues; the sequence is LESTPSVSSLPQMQHHL. Residues 1430–1450 show a composition bias toward low complexity; it reads PLLPSHQMMPPPQQHSSSLQH. Residues 1463-1484 show a composition bias toward polar residues; sequence DTSQHQTIQQQSNHPTQQQLQH. Residues 1567-1576 are compositionally biased toward low complexity; it reads QHQQYMQQQQ. Residues 1577–1587 show a composition bias toward basic residues; it reads QHHHQHQQQPH.

It belongs to the Mediator complex subunit 23 family. As to quaternary structure, component of the Mediator complex. Interacts with let-19/mdt-13.

Its subcellular location is the nucleus. Its function is as follows. Component of the Mediator complex, a coactivator involved in regulated gene transcription of nearly all RNA polymerase II-dependent genes. Mediator functions as a bridge to convey information from gene-specific regulatory proteins to the basal RNA polymerase II transcription machinery. Mediator is recruited to promoters by direct interactions with regulatory proteins and serves as a scaffold for the assembly of a functional pre-initiation complex with RNA polymerase II and the general transcription factors. Functions downstream of receptor let-23 and let-60/Ras during vulval induction likely by down-regulating the expression of phosphatase dep-1 and lin-12/Notch in vulva precursor cell descendants with a primary cell fate. Acts to repress beta-catenin target genes. Required for asymmetric division of T-cells. Plays a role in responses to M.nematophilum-mediated bacterial infection by promoting tail swelling and preventing constipation. The polypeptide is Mediator of RNA polymerase II transcription subunit 23 (sur-2) (Caenorhabditis elegans).